The chain runs to 150 residues: Phosphoribosyl-AMP cyclohydrolase (150 aa).

Residue Asp93 coordinates Mg(2+). Cys94 is a binding site for Zn(2+). Positions 95 and 97 each coordinate Mg(2+). Cys112 and Cys119 together coordinate Zn(2+).

Belongs to the PRA-CH family. In terms of assembly, homodimer. It depends on Mg(2+) as a cofactor. Zn(2+) serves as cofactor.

Its subcellular location is the cytoplasm. It catalyses the reaction 1-(5-phospho-beta-D-ribosyl)-5'-AMP + H2O = 1-(5-phospho-beta-D-ribosyl)-5-[(5-phospho-beta-D-ribosylamino)methylideneamino]imidazole-4-carboxamide. It participates in amino-acid biosynthesis; L-histidine biosynthesis; L-histidine from 5-phospho-alpha-D-ribose 1-diphosphate: step 3/9. In terms of biological role, catalyzes the hydrolysis of the adenine ring of phosphoribosyl-AMP. The sequence is that of Phosphoribosyl-AMP cyclohydrolase from Rhizobium etli (strain CIAT 652).